Consider the following 174-residue polypeptide: Co-chaperone protein HscB homolog (174 aa).

One can recognise a J domain in the interval 2-74 (NYFELFKFSP…IRRAEHLLSL (73 aa)).

The protein belongs to the HscB family. In terms of assembly, interacts with HscA and stimulates its ATPase activity.

Its function is as follows. Co-chaperone involved in the maturation of iron-sulfur cluster-containing proteins. Seems to help targeting proteins to be folded toward HscA. The polypeptide is Co-chaperone protein HscB homolog (Shewanella sp. (strain W3-18-1)).